The following is a 793-amino-acid chain: Methionine--tRNA ligase (793 aa).

The 'HIGH' region signature appears at Pro11–Asn21. 4 residues coordinate Zn(2+): Cys142, Cys145, Cys155, and Cys158. Residues Lys334–Ser338 carry the 'KMSKS' region motif. An ATP-binding site is contributed by Lys337. The span at Ser581 to Lys590 shows a compositional bias: basic and acidic residues. The disordered stretch occupies residues Ser581–Ala610. Residues Gly591–Ala610 are compositionally biased toward low complexity. Residues Phe622 to Ile727 enclose the tRNA-binding domain.

This sequence belongs to the class-I aminoacyl-tRNA synthetase family. MetG type 1 subfamily. Homodimer. The cofactor is Zn(2+).

It is found in the cytoplasm. The enzyme catalyses tRNA(Met) + L-methionine + ATP = L-methionyl-tRNA(Met) + AMP + diphosphate. Its function is as follows. Is required not only for elongation of protein synthesis but also for the initiation of all mRNA translation through initiator tRNA(fMet) aminoacylation. The chain is Methionine--tRNA ligase from Treponema denticola (strain ATCC 35405 / DSM 14222 / CIP 103919 / JCM 8153 / KCTC 15104).